Reading from the N-terminus, the 71-residue chain is Large ribosomal subunit protein uL29 (71 aa).

The protein belongs to the universal ribosomal protein uL29 family.

This chain is Large ribosomal subunit protein uL29, found in Rickettsia canadensis (strain McKiel).